We begin with the raw amino-acid sequence, 395 residues long: MSPVSRSRPNEDTLGSQKRRRFSESPPSALQTSRSPRGGGFGSLLSGPEGLQPPRGAQGVRPLHPISRPRSGERPLPLGIRTLACSSSPICGGYRYHHNYAGDPSWAEDQEKEKEESYRQRRLKERERIGELGAPEVWGLSPKIPEPDSDEHTPAEDEVKNQKSSSSDFTNEEKRTKTSHSTKKKRKKKPSKRKHKKYYDSSSDCHSSSDSDKKKVKTKKKEKKKKHRAKQLKKKRTKKEYNDISCKASERDLPEDAWMEQSMSAESMDLIGPEAPVIHTSQDEKPLNYGHALLPGEGAAMAEYVKAGKRIPRRGEIGLTSEEIASFECSGYVMSGSRHRRMEAVRLRKENQIYSADEKRALASFNQEERRKRENKILASFREMVYRKTKGKDDK.

Disordered regions lie at residues 1–77 (MSPV…RPLP) and 91–247 (CGGY…ISCK). Phosphoserine is present on residues S23 and S25. Residues 25-35 (SPPSALQTSRS) are compositionally biased toward polar residues. Over residues 109–130 (DQEKEKEESYRQRRLKERERIG) the composition is skewed to basic and acidic residues. S149 bears the Phosphoserine mark. The segment covering 150–161 (DEHTPAEDEVKN) has biased composition (basic and acidic residues). Basic residues-rich tracts occupy residues 177–197 (KTSH…KHKK) and 214–238 (KKVK…KRTK).

It belongs to the NKAP family. As to quaternary structure, interacts with RBPJ, CIR1 and HDAC3. In terms of tissue distribution, specific to testis (at protein level). Detected in differenting spermatogonia and early spermatocytes (at protein level).

Its subcellular location is the nucleus. Transcriptional repressor of Notch-mediated signaling. Required for spermatogenesis. The polypeptide is NKAP-like protein (Mus musculus (Mouse)).